The following is a 95-amino-acid chain: uncharacterized protein (95 aa).

This is an uncharacterized protein from Escherichia coli (strain K12).